Reading from the N-terminus, the 403-residue chain is Farnesyl pyrophosphate synthase (403 aa).

Mg(2+) is bound by residues Asp156 and Asp160. The DDXXD motif motif lies at 156-160 (DDLAD).

This sequence belongs to the FPP/GGPP synthase family. It depends on Mg(2+) as a cofactor.

It carries out the reaction isopentenyl diphosphate + (2E)-geranyl diphosphate = (2Z,6E)-farnesyl diphosphate + diphosphate. It participates in pheromone biosynthesis. Its function is as follows. Farnesyl pyrophosphate synthase involved in pheromone biosynthesis by catalyzing the formation of (2Z,6E)-farnesyl diphosphate. This chain is Farnesyl pyrophosphate synthase, found in Nezara viridula (Southern green stink bug).